Here is a 281-residue protein sequence, read N- to C-terminus: Light-independent protochlorophyllide reductase iron-sulfur ATP-binding protein (281 aa).

ATP is bound by residues 10–15 and lysine 39; that span reads GIGKST. Residue serine 14 coordinates Mg(2+). 2 residues coordinate [4Fe-4S] cluster: cysteine 95 and cysteine 129. Residue 180–181 participates in ATP binding; sequence NR.

This sequence belongs to the NifH/BchL/ChlL family. Homodimer. Protochlorophyllide reductase is composed of three subunits; ChlL, ChlN and ChlB. The cofactor is [4Fe-4S] cluster.

The catalysed reaction is chlorophyllide a + oxidized 2[4Fe-4S]-[ferredoxin] + 2 ADP + 2 phosphate = protochlorophyllide a + reduced 2[4Fe-4S]-[ferredoxin] + 2 ATP + 2 H2O. It participates in porphyrin-containing compound metabolism; chlorophyll biosynthesis (light-independent). Component of the dark-operative protochlorophyllide reductase (DPOR) that uses Mg-ATP and reduced ferredoxin to reduce ring D of protochlorophyllide (Pchlide) to form chlorophyllide a (Chlide). This reaction is light-independent. The L component serves as a unique electron donor to the NB-component of the complex, and binds Mg-ATP. This is Light-independent protochlorophyllide reductase iron-sulfur ATP-binding protein from Thermosynechococcus vestitus (strain NIES-2133 / IAM M-273 / BP-1).